Reading from the N-terminus, the 415-residue chain is Serine hydroxymethyltransferase (415 aa).

(6S)-5,6,7,8-tetrahydrofolate contacts are provided by residues Leu-121 and 125–127; that span reads GHL. N6-(pyridoxal phosphate)lysine is present on Lys-229.

The protein belongs to the SHMT family. Homodimer. Pyridoxal 5'-phosphate is required as a cofactor.

Its subcellular location is the cytoplasm. The catalysed reaction is (6R)-5,10-methylene-5,6,7,8-tetrahydrofolate + glycine + H2O = (6S)-5,6,7,8-tetrahydrofolate + L-serine. Its pathway is one-carbon metabolism; tetrahydrofolate interconversion. The protein operates within amino-acid biosynthesis; glycine biosynthesis; glycine from L-serine: step 1/1. Catalyzes the reversible interconversion of serine and glycine with tetrahydrofolate (THF) serving as the one-carbon carrier. This reaction serves as the major source of one-carbon groups required for the biosynthesis of purines, thymidylate, methionine, and other important biomolecules. Also exhibits THF-independent aldolase activity toward beta-hydroxyamino acids, producing glycine and aldehydes, via a retro-aldol mechanism. The protein is Serine hydroxymethyltransferase of Bordetella petrii (strain ATCC BAA-461 / DSM 12804 / CCUG 43448).